The primary structure comprises 682 residues: Potassium-transporting ATPase ATP-binding subunit (682 aa).

Transmembrane regions (helical) follow at residues 34–54 (PVMF…VAMA), 62–82 (AGFT…ANVA), 219–239 (IALT…TATL), and 254–274 (VLVA…LSAI). The active-site 4-aspartylphosphate intermediate is the D307. ATP-binding positions include D344, E348, 377–384 (FTAQTRMS), and K395. The Mg(2+) site is built by D518 and D522. 3 helical membrane-spanning segments follow: residues 588–608 (FAII…LNVM), 616–636 (AILS…PLAL), and 662–682 (LVVP…FGLV).

The protein belongs to the cation transport ATPase (P-type) (TC 3.A.3) family. Type IA subfamily. The system is composed of three essential subunits: KdpA, KdpB and KdpC.

Its subcellular location is the cell inner membrane. It catalyses the reaction K(+)(out) + ATP + H2O = K(+)(in) + ADP + phosphate + H(+). Its function is as follows. Part of the high-affinity ATP-driven potassium transport (or Kdp) system, which catalyzes the hydrolysis of ATP coupled with the electrogenic transport of potassium into the cytoplasm. This subunit is responsible for energy coupling to the transport system and for the release of the potassium ions to the cytoplasm. The sequence is that of Potassium-transporting ATPase ATP-binding subunit from Enterobacter sp. (strain 638).